The sequence spans 268 residues: Indole-3-glycerol phosphate synthase (268 aa).

The protein belongs to the TrpC family.

It carries out the reaction 1-(2-carboxyphenylamino)-1-deoxy-D-ribulose 5-phosphate + H(+) = (1S,2R)-1-C-(indol-3-yl)glycerol 3-phosphate + CO2 + H2O. It participates in amino-acid biosynthesis; L-tryptophan biosynthesis; L-tryptophan from chorismate: step 4/5. This is Indole-3-glycerol phosphate synthase from Acinetobacter baumannii (strain AB0057).